The chain runs to 232 residues: Orotidine 5'-phosphate decarboxylase (232 aa).

Substrate-binding positions include aspartate 13, lysine 35, 62-71 (DLKFHDIPNT), threonine 122, arginine 182, glutamine 191, glycine 211, and arginine 212. Residue lysine 64 is the Proton donor of the active site.

It belongs to the OMP decarboxylase family. Type 1 subfamily. In terms of assembly, homodimer.

It carries out the reaction orotidine 5'-phosphate + H(+) = UMP + CO2. Its pathway is pyrimidine metabolism; UMP biosynthesis via de novo pathway; UMP from orotate: step 2/2. Catalyzes the decarboxylation of orotidine 5'-monophosphate (OMP) to uridine 5'-monophosphate (UMP). The chain is Orotidine 5'-phosphate decarboxylase from Pseudomonas paraeruginosa (strain DSM 24068 / PA7) (Pseudomonas aeruginosa (strain PA7)).